The sequence spans 93 residues: Antitoxin EndoAI (93 aa).

The protein belongs to the MazE/EndoAI family. Homodimer, forms a heterohexamer composed of alternating toxin and antitoxin homodimers which inhibits the toxin's endoribonuclease activity. Antitoxin prevents RNA binding to the endoribonuclease.

Antitoxin component of a type II toxin-antitoxin (TA) system. Antitoxin that directly inhibits activity of EndoA in vitro. Upon expression in E.coli counteracts inhibitory effect of endoribonuclease EndoA. The EndoA-EndoAI complex does not seem to bind its own promoter. This Bacillus subtilis (strain 168) protein is Antitoxin EndoAI.